The following is a 560-amino-acid chain: MDIKRTILIAALAVVSYVMVLKWNDDYGQAALPTQNTAASTVAPGLPDGVPAGNNGASADVPSANAESSPAELAPVALSKDLIRVKTDVLELAIDPVGGDIVQLNLPKYPRRQDHPNIPFQLFDNGGERVYLAQSGLTGTDGPDARASGRPLYAAEQKSYQLADGQEQLVVDLKFSDNGVNYIKRFSFKRGEYDLNVSYLIDNQSGQAWNGNMFAQLKRDASGDPSSSTATGTATYLGAALWTASEPYKKVSMKDIDKGSLKENVSGGWVAWLQHYFVTAWIPAKSDNNVVQTRKDSQGNYIIGYTGPVISVPAGGKVETSALLYAGPKIQSKLKELSPGLELTVDYGFLWFIAQPIFWLLQHIHSLLGNWGWSIIVLTMLIKGLFFPLSAASYRSMARMRAVAPKLAALKERFGDDRQKMSQAMMELYKKEKINPLGGCLPILVQMPVFLALYWVLLESVEMRQAPWILWITDLSIKDPFFILPIIMGATMFIQQRLNPTPPDPMQAKVMKMMPIIFTFFFLWFPAGLVLYWVVNNCLSISQQWYITRRIEAATKKAAA.

The chain crosses the membrane as a helical span at residues 1 to 21 (MDIKRTILIAALAVVSYVMVL). The disordered stretch occupies residues 42 to 66 (VAPGLPDGVPAGNNGASADVPSANA). The next 5 helical transmembrane spans lie at 341 to 361 (LELT…FWLL), 367 to 387 (LLGN…GLFF), 437 to 457 (LGGC…YWVL), 468 to 488 (WILW…PIIM), and 515 to 535 (PIIF…YWVV).

The protein belongs to the OXA1/ALB3/YidC family. Type 1 subfamily. Interacts with the Sec translocase complex via SecD. Specifically interacts with transmembrane segments of nascent integral membrane proteins during membrane integration.

Its subcellular location is the cell inner membrane. Its function is as follows. Required for the insertion and/or proper folding and/or complex formation of integral membrane proteins into the membrane. Involved in integration of membrane proteins that insert both dependently and independently of the Sec translocase complex, as well as at least some lipoproteins. Aids folding of multispanning membrane proteins. The protein is Membrane protein insertase YidC of Pseudomonas putida (strain ATCC 47054 / DSM 6125 / CFBP 8728 / NCIMB 11950 / KT2440).